Consider the following 398-residue polypeptide: Dual-specificity RNA methyltransferase RlmN (398 aa).

Glu-121 serves as the catalytic Proton acceptor. The region spanning 127-370 is the Radical SAM core domain; it reads ETDRGTLCVS…VRTPRGRDIL (244 aa). A disulfide bond links Cys-134 and Cys-373. Residues Cys-141, Cys-145, and Cys-148 each contribute to the [4Fe-4S] cluster site. S-adenosyl-L-methionine is bound by residues 199 to 200, Ser-231, 253 to 255, and Asn-330; these read GE and SLH. Residue Cys-373 is the S-methylcysteine intermediate of the active site.

Belongs to the radical SAM superfamily. RlmN family. [4Fe-4S] cluster is required as a cofactor.

Its subcellular location is the cytoplasm. The catalysed reaction is adenosine(2503) in 23S rRNA + 2 reduced [2Fe-2S]-[ferredoxin] + 2 S-adenosyl-L-methionine = 2-methyladenosine(2503) in 23S rRNA + 5'-deoxyadenosine + L-methionine + 2 oxidized [2Fe-2S]-[ferredoxin] + S-adenosyl-L-homocysteine. It catalyses the reaction adenosine(37) in tRNA + 2 reduced [2Fe-2S]-[ferredoxin] + 2 S-adenosyl-L-methionine = 2-methyladenosine(37) in tRNA + 5'-deoxyadenosine + L-methionine + 2 oxidized [2Fe-2S]-[ferredoxin] + S-adenosyl-L-homocysteine. Functionally, specifically methylates position 2 of adenine 2503 in 23S rRNA and position 2 of adenine 37 in tRNAs. m2A2503 modification seems to play a crucial role in the proofreading step occurring at the peptidyl transferase center and thus would serve to optimize ribosomal fidelity. The protein is Dual-specificity RNA methyltransferase RlmN of Rhodopseudomonas palustris (strain BisB5).